Consider the following 341-residue polypeptide: L-threonine 3-dehydrogenase (341 aa).

Position 38 (C38) interacts with Zn(2+). Residues T40 and H43 each act as charge relay system in the active site. Positions 63, 64, 93, 96, 99, and 107 each coordinate Zn(2+). Residues I175, D195, R200, 262-264, and 286-287 contribute to the NAD(+) site; these read LGI and IY.

The protein belongs to the zinc-containing alcohol dehydrogenase family. Homotetramer. Zn(2+) is required as a cofactor.

It is found in the cytoplasm. It carries out the reaction L-threonine + NAD(+) = (2S)-2-amino-3-oxobutanoate + NADH + H(+). It functions in the pathway amino-acid degradation; L-threonine degradation via oxydo-reductase pathway; glycine from L-threonine: step 1/2. Its function is as follows. Catalyzes the NAD(+)-dependent oxidation of L-threonine to 2-amino-3-ketobutyrate. This Salmonella arizonae (strain ATCC BAA-731 / CDC346-86 / RSK2980) protein is L-threonine 3-dehydrogenase.